The sequence spans 474 residues: Carbohydrate sulfotransferase 3 (474 aa).

Residues 1 to 19 (MEKGLALPQDCRDLVHNLK) lie on the Cytoplasmic side of the membrane. The chain crosses the membrane as a helical; Signal-anchor for type II membrane protein span at residues 20–38 (IRGRYVLFLAFVVIVFIFI). Over 39-474 (EKENKIISRV…LEERGTFWVT (436 aa)) the chain is Lumenal. N-linked (GlcNAc...) asparagine glycosylation is found at asparagine 63, asparagine 74, and asparagine 96. 137–143 (TRTGSSF) lines the 3'-phosphoadenylyl sulfate pocket. N-linked (GlcNAc...) asparagine glycosylation occurs at asparagine 252. 3'-phosphoadenylyl sulfate is bound at residue 297 to 305 (RDPRAVLAS). N-linked (GlcNAc...) asparagine glycans are attached at residues asparagine 415 and asparagine 459.

It belongs to the sulfotransferase 1 family. Gal/GlcNAc/GalNAc subfamily. N-glycosylated.

The protein localises to the golgi apparatus membrane. It catalyses the reaction chondroitin beta-D-glucuronate + n 3'-phosphoadenylyl sulfate = chondroitin 6'-sulfate + n adenosine 3',5'-bisphosphate + n H(+). The enzyme catalyses 3'-phosphoadenylyl sulfate + keratan = adenosine 3',5'-bisphosphate + keratan 6'-sulfate.. In terms of biological role, sulfotransferase that utilizes 3'-phospho-5'-adenylyl sulfate (PAPS) as sulfonate donor to catalyze the transfer of sulfate to position 6 of the N-acetylgalactosamine (GalNAc) residue of chondroitin. Chondroitin sulfate constitutes the predominant proteoglycan present in cartilage and is distributed on the surfaces of many cells and extracellular matrices. Catalyzes with a lower efficiency the sulfation of Gal residues of keratan sulfate, another glycosaminoglycan. Can also catalyze the sulfation of the Gal residues in sialyl N-acetyllactosamine (sialyl LacNAc) oligosaccharides. May play a role in the maintenance of naive T-lymphocytes in the spleen. The polypeptide is Carbohydrate sulfotransferase 3 (Chst3) (Rattus norvegicus (Rat)).